We begin with the raw amino-acid sequence, 294 residues long: Small ribosomal subunit protein uS2 (294 aa).

Positions 254–294 (ESSNTEAPVAETAAAEAPVADAAIEAPVAEEAKTTEADDTK) are disordered. Over residues 259 to 282 (EAPVAETAAAEAPVADAAIEAPVA) the composition is skewed to low complexity. Residues 283–294 (EEAKTTEADDTK) show a composition bias toward basic and acidic residues.

The protein belongs to the universal ribosomal protein uS2 family.

The sequence is that of Small ribosomal subunit protein uS2 from Renibacterium salmoninarum (strain ATCC 33209 / DSM 20767 / JCM 11484 / NBRC 15589 / NCIMB 2235).